The primary structure comprises 215 residues: MEIKKLNHKNRYKILKMFSNIYINFKTGLVFTSNFELLISVMLSAQTTDRMVNKTTQRLFGIANTPSGFISIGLHAIRENIRKLGLYNKKSSNILRTCEILLKRYGGKVPNNREDLESLPGVGRKTANVILNVIFKKKTIAVDTHVFRLCNRIGFAKGTTVLTVEKKLLNIVPEKFKLNFHAWFIMHGRYICTSRVPKCSKCIISSLCEFKDKNI.

The HhH domain maps to 113 to 132; that stretch reads REDLESLPGVGRKTANVILN. [4Fe-4S] cluster is bound by residues Cys192, Cys199, Cys202, and Cys208.

The protein belongs to the Nth/MutY family. Requires [4Fe-4S] cluster as cofactor.

The catalysed reaction is 2'-deoxyribonucleotide-(2'-deoxyribose 5'-phosphate)-2'-deoxyribonucleotide-DNA = a 3'-end 2'-deoxyribonucleotide-(2,3-dehydro-2,3-deoxyribose 5'-phosphate)-DNA + a 5'-end 5'-phospho-2'-deoxyribonucleoside-DNA + H(+). Functionally, DNA repair enzyme that has both DNA N-glycosylase activity and AP-lyase activity. The DNA N-glycosylase activity releases various damaged pyrimidines from DNA by cleaving the N-glycosidic bond, leaving an AP (apurinic/apyrimidinic) site. The AP-lyase activity cleaves the phosphodiester bond 3' to the AP site by a beta-elimination, leaving a 3'-terminal unsaturated sugar and a product with a terminal 5'-phosphate. In Buchnera aphidicola subsp. Baizongia pistaciae (strain Bp), this protein is Endonuclease III.